The chain runs to 361 residues: Peptide chain release factor 1 (361 aa).

Position 235 is an N5-methylglutamine (Gln235).

This sequence belongs to the prokaryotic/mitochondrial release factor family. In terms of processing, methylated by PrmC. Methylation increases the termination efficiency of RF1.

The protein localises to the cytoplasm. Functionally, peptide chain release factor 1 directs the termination of translation in response to the peptide chain termination codons UAG and UAA. The polypeptide is Peptide chain release factor 1 (Rhodopseudomonas palustris (strain ATCC BAA-98 / CGA009)).